The sequence spans 414 residues: Ribulose bisphosphate carboxylase large chain (414 aa).

The substrate site is built by asparagine 102 and threonine 152. Catalysis depends on lysine 154, which acts as the Proton acceptor. Residue lysine 156 coordinates substrate. The Mg(2+) site is built by lysine 180, aspartate 182, and glutamate 183. Position 180 is an N6-carboxylysine (lysine 180). Residue histidine 273 is the Proton acceptor of the active site. Substrate-binding residues include arginine 274, histidine 306, and serine 358.

The protein belongs to the RuBisCO large chain family. Type I subfamily. As to quaternary structure, heterohexadecamer of 8 large chains and 8 small chains; disulfide-linked. The disulfide link is formed within the large subunit homodimers. It depends on Mg(2+) as a cofactor. The disulfide bond which can form in the large chain dimeric partners within the hexadecamer appears to be associated with oxidative stress and protein turnover.

The protein localises to the plastid. It is found in the chloroplast. It catalyses the reaction 2 (2R)-3-phosphoglycerate + 2 H(+) = D-ribulose 1,5-bisphosphate + CO2 + H2O. The catalysed reaction is D-ribulose 1,5-bisphosphate + O2 = 2-phosphoglycolate + (2R)-3-phosphoglycerate + 2 H(+). In terms of biological role, ruBisCO catalyzes two reactions: the carboxylation of D-ribulose 1,5-bisphosphate, the primary event in carbon dioxide fixation, as well as the oxidative fragmentation of the pentose substrate in the photorespiration process. Both reactions occur simultaneously and in competition at the same active site. This is Ribulose bisphosphate carboxylase large chain (rbcL) from Antrophyum reticulatum (Ox-tongue fern).